Here is a 435-residue protein sequence, read N- to C-terminus: DEAD-box ATP-dependent RNA helicase CshB (435 aa).

The Q motif motif lies at serine 5–glutamine 33. The 173-residue stretch at isoleucine 36–glutamate 208 folds into the Helicase ATP-binding domain. Residue serine 49–threonine 56 coordinates ATP. Positions aspartate 156 to aspartate 159 match the DEAD box motif. Positions leucine 235–valine 378 constitute a Helicase C-terminal domain. The segment at arginine 383–arginine 435 is disordered. Residues alanine 391 to methionine 403 show a composition bias toward basic and acidic residues. The segment covering arginine 404–asparagine 420 has biased composition (basic residues).

This sequence belongs to the DEAD box helicase family. CshB subfamily.

It localises to the cytoplasm. The catalysed reaction is ATP + H2O = ADP + phosphate + H(+). In terms of biological role, DEAD-box RNA helicase involved in cold tolerance, motility, and tolerance to heat, alkali and oxidative stress. The polypeptide is DEAD-box ATP-dependent RNA helicase CshB (Listeria monocytogenes serovar 1/2a (strain ATCC BAA-679 / EGD-e)).